A 250-amino-acid polypeptide reads, in one-letter code: 23S rRNA (guanine(2535)-N(1))-methyltransferase (250 aa).

The catalysed reaction is guanosine(2535) in 23S rRNA + S-adenosyl-L-methionine = N(1)-methylguanosine(2535) in 23S rRNA + S-adenosyl-L-homocysteine + H(+). In terms of biological role, specifically methylates the guanine-2535 in 23S ribosomal RNA. Confers resistance to antibiotic avilamycin, an orthosomycin antibiotic. The polypeptide is 23S rRNA (guanine(2535)-N(1))-methyltransferase (aviRa) (Streptomyces viridochromogenes).